A 358-amino-acid chain; its full sequence is MAVVETGAAATAADAGGVVIQPPPSSPPSSMTSQDSGVSSDDQNHHSRIDQVLRHDQGLYSKIGSHVARSDGVDGGESFKRDMRELQELFSKLNPMAEEFVPPSLNKQGGNGVNGGFFTSAGSFFRNNGFAGTGNGGYGNENGGFRRKKSFGQGKRRMNARTSMAQREDVIRRTVYVSDLDQQVTEEQLAGLFVSCGQVVDCRICGDPNSVLRFAFIEFTDEEGAMTALNLSGTMLGFYPVKVLPSKTAIAPVNPTFLPRTEDEREMCARTIYCTNIDKKVTQSDVKIFFESFCGEVYRLRLLGDYQHSTRIAFVEFVMAESAIAALNCSGVVLGSLPIRVSPSKTPVRPRSPRHPMH.

The span at 1-19 (MAVVETGAAATAADAGGVV) shows a compositional bias: low complexity. Residues 1–45 (MAVVETGAAATAADAGGVVIQPPPSSPPSSMTSQDSGVSSDDQNH) are disordered. A compositionally biased stretch (polar residues) spans 31-41 (MTSQDSGVSSD). A PAM2-like motif is present at residues 92-102 (KLNPMAEEFVP). A disordered region spans residues 136–164 (GGYGNENGGFRRKKSFGQGKRRMNARTSM). Residues 145 to 159 (FRRKKSFGQGKRRMN) are compositionally biased toward basic residues. The Bipartite nuclear localization signal motif lies at 146 to 157 (RRKKSFGQGKRR). RRM domains follow at residues 173–248 (RTVY…PSKT) and 270–346 (RTIY…PSKT).

Expressed in cauline leaves, stems, immature siliques and primary inflorescences.

The protein resides in the nucleus. The sequence is that of Polyadenylate-binding protein-interacting protein 11 (CID11) from Arabidopsis thaliana (Mouse-ear cress).